The following is a 133-amino-acid chain: Large ribosomal subunit protein uL14 (133 aa).

The protein belongs to the universal ribosomal protein uL14 family. In terms of assembly, part of the 50S ribosomal subunit. Forms a cluster with proteins L3 and L19. In the 70S ribosome, L14 and L19 interact and together make contacts with the 16S rRNA in bridges B5 and B8.

Functionally, binds to 23S rRNA. Forms part of two intersubunit bridges in the 70S ribosome. This is Large ribosomal subunit protein uL14 from Gloeobacter violaceus (strain ATCC 29082 / PCC 7421).